A 199-amino-acid chain; its full sequence is Fe/S biogenesis protein NfuA (199 aa).

[4Fe-4S] cluster is bound by residues C151 and C154.

The protein belongs to the NfuA family. Homodimer. The cofactor is [4Fe-4S] cluster.

Involved in iron-sulfur cluster biogenesis. Binds a 4Fe-4S cluster, can transfer this cluster to apoproteins, and thereby intervenes in the maturation of Fe/S proteins. Could also act as a scaffold/chaperone for damaged Fe/S proteins. The chain is Fe/S biogenesis protein NfuA from Xylella fastidiosa (strain M23).